The sequence spans 453 residues: Vitamin D3 receptor A (453 aa).

A DNA-binding region (nuclear receptor) is located at residues 53-128 (PRICGVCGDK…IGMMKEFILT (76 aa)). Zn(2+)-binding residues include cysteine 56, cysteine 59, cysteine 73, cysteine 76, cysteine 92, cysteine 98, cysteine 108, and cysteine 111. NR C4-type zinc fingers lie at residues 56 to 76 (CGVCGDKATGFHFNAMTCEGC) and 92 to 111 (CPFNGNCTITKDNRRHCQAC). Positions 129-158 (DEEVQRKKDLIMKRKEEEAAREARKPRLSD) are hinge. The region spanning 159-449 (EQMQIINSLV…LTPLVLEVFG (291 aa)) is the NR LBD domain. Residues tyrosine 175 and serine 265 each contribute to the calcitriol site. The interval 274 to 292 (KMIPGFRDLTAEDQIALLK) is interaction with coactivator LXXLL motif. Arginine 302, serine 306, histidine 333, and histidine 423 together coordinate calcitriol. The short motif at 442-450 (PLVLEVFGS) is the 9aaTAD element.

The protein belongs to the nuclear hormone receptor family. NR1 subfamily. In terms of assembly, homodimer in the absence of bound vitamin D3. Heterodimer with RXRA after vitamin D3 binding. Interacts with ncoa1 and possibly other coactivators, leading to a strong increase of transcription of target genes. In terms of tissue distribution, detected in embryo 24 to 48 hours after fertilization and in gastrula.

It localises to the nucleus. The protein localises to the cytoplasm. Its function is as follows. Nuclear receptor for calcitriol, the active form of vitamin D3 which mediates the action of this vitamin on cells. Enters the nucleus upon vitamin D3 binding where it forms heterodimers with the retinoid X receptor/RXR. The VDR-RXR heterodimers bind to specific response elements on DNA and activate the transcription of vitamin D3-responsive target genes. Recruited to promoters via its interaction with BAZ1B/WSTF which mediates the interaction with acetylated histones, an essential step for VDR-promoter association. Plays a central role in calcium homeostasis. This is Vitamin D3 receptor A (vdra) from Danio rerio (Zebrafish).